Here is a 580-residue protein sequence, read N- to C-terminus: N(6)-adenosine-methyltransferase catalytic subunit METTL3 (580 aa).

Residues 1-70 (MSDTWSSIQA…PKPSTASAVP (70 aa)) are disordered. N-acetylserine; alternate is present on serine 2. Serine 2 bears the Phosphoserine; alternate mark. Positions 28–37 (QDSGHLDLRN) are enriched in basic and acidic residues. Phosphoserine is present on residues serine 43, serine 48, and serine 50. Residues lysine 177, lysine 211, lysine 212, and lysine 215 each participate in a glycyl lysine isopeptide (Lys-Gly) (interchain with G-Cter in SUMO1) cross-link. Positions 198 to 219 (LNSSASEPAKEPAKKSRKHAAS) are disordered. Residues 210 to 215 (AKKSRK) carry the Nuclear localization signal motif. Phosphoserine is present on residues serine 219 and serine 243. The residue at position 348 (threonine 348) is a Phosphothreonine. Phosphoserine is present on serine 350. Residues 377 to 378 (DI) and aspartate 395 contribute to the S-adenosyl-L-methionine site. Residues 396–410 (PPWDIHMELPYGTLT) form a gate loop 1 region. Interaction with METTL14 stretches follow at residues 450–454 (ERVDE) and 464–480 (QRIIRTGRTGHWLNHGK). Residues 462 to 479 (QLQRIIRTGRTGHWLNHG) are interphase loop. A positively charged region required for RNA-binding region spans residues 465-478 (RIIRTGRTGHWLNH). Residues 507–515 (VRSTSHKPD) are gate loop 2. Residues lysine 513, 536-539 (RPHN), and 549-550 (NQ) contribute to the S-adenosyl-L-methionine site.

The protein belongs to the MT-A70-like family. As to quaternary structure, heterodimer; heterodimerizes with METTL14 to form an antiparallel heterodimer that constitutes an active methyltransferase. Component of the WMM complex, a N6-methyltransferase complex composed of a catalytic subcomplex, named MAC, and of an associated subcomplex, named MACOM. The MAC subcomplex is composed of METTL3 and METTL14. The MACOM subcomplex is composed of WTAP, ZC3H13, CBLL1/HAKAI, VIRMA, and, in some cases of RBM15 (RBM15 or RBM15B). Interacts with NCBP1/CBP80. Interacts with EIF4E. Interacts with EIF3B. Post-translationally, sumoylation inhibits the N6-adenosine-methyltransferase activity. Sumoylation does not affect subcellular location or interaction with METTL14. Desumoylated by SENP1. In terms of tissue distribution, widely expressed at low level. Expressed in spleen, thymus, prostate, testis, ovary, small intestine, colon and peripheral blood leukocytes.

Its subcellular location is the nucleus. The protein localises to the nucleus speckle. The protein resides in the cytoplasm. The catalysed reaction is an adenosine in mRNA + S-adenosyl-L-methionine = an N(6)-methyladenosine in mRNA + S-adenosyl-L-homocysteine + H(+). With respect to regulation, methyltransferase activity is regulated by miRNAs via a sequence pairing mechanism. Methyltransferase activity is inhibited by sumoylation. The METTL3-METTL14 heterodimer forms a N6-methyltransferase complex that methylates adenosine residues at the N(6) position of some RNAs and regulates various processes such as the circadian clock, differentiation of embryonic and hematopoietic stem cells, cortical neurogenesis, response to DNA damage, differentiation of T-cells and primary miRNA processing. In the heterodimer formed with METTL14, METTL3 constitutes the catalytic core. N6-methyladenosine (m6A), which takes place at the 5'-[AG]GAC-3' consensus sites of some mRNAs, plays a role in mRNA stability, processing, translation efficiency and editing. M6A acts as a key regulator of mRNA stability: methylation is completed upon the release of mRNA into the nucleoplasm and promotes mRNA destabilization and degradation. In embryonic stem cells (ESCs), m6A methylation of mRNAs encoding key naive pluripotency-promoting transcripts results in transcript destabilization, promoting differentiation of ESCs. M6A regulates the length of the circadian clock: acts as an early pace-setter in the circadian loop by putting mRNA production on a fast-track for facilitating nuclear processing, thereby providing an early point of control in setting the dynamics of the feedback loop. M6A also regulates circadian regulation of hepatic lipid metabolism. M6A regulates spermatogonial differentiation and meiosis and is essential for male fertility and spermatogenesis. Also required for oogenesis. Involved in the response to DNA damage: in response to ultraviolet irradiation, METTL3 rapidly catalyzes the formation of m6A on poly(A) transcripts at DNA damage sites, leading to the recruitment of POLK to DNA damage sites. M6A is also required for T-cell homeostasis and differentiation: m6A methylation of transcripts of SOCS family members (SOCS1, SOCS3 and CISH) in naive T-cells promotes mRNA destabilization and degradation, promoting T-cell differentiation. Inhibits the type I interferon response by mediating m6A methylation of IFNB. M6A also takes place in other RNA molecules, such as primary miRNA (pri-miRNAs). Mediates m6A methylation of Xist RNA, thereby participating in random X inactivation: m6A methylation of Xist leads to target YTHDC1 reader on Xist and promote transcription repression activity of Xist. M6A also regulates cortical neurogenesis: m6A methylation of transcripts related to transcription factors, neural stem cells, the cell cycle and neuronal differentiation during brain development promotes their destabilization and decay, promoting differentiation of radial glial cells. METTL3 mediates methylation of pri-miRNAs, marking them for recognition and processing by DGCR8. Acts as a positive regulator of mRNA translation independently of the methyltransferase activity: promotes translation by interacting with the translation initiation machinery in the cytoplasm. Its overexpression in a number of cancer cells suggests that it may participate in cancer cell proliferation by promoting mRNA translation. During human coronavirus SARS-CoV-2 infection, adds m6A modifications in SARS-CoV-2 RNA leading to decreased RIGI binding and subsequently dampening the sensing and activation of innate immune responses. This is N(6)-adenosine-methyltransferase catalytic subunit METTL3 from Homo sapiens (Human).